A 239-amino-acid polypeptide reads, in one-letter code: Probable transcriptional regulatory protein BBR47_14810 (239 aa).

Belongs to the TACO1 family. YeeN subfamily.

It is found in the cytoplasm. The sequence is that of Probable transcriptional regulatory protein BBR47_14810 from Brevibacillus brevis (strain 47 / JCM 6285 / NBRC 100599).